The following is a 393-amino-acid chain: Phosphoglycerate kinase (393 aa).

Substrate contacts are provided by residues 21 to 23 (DLN), Arg-36, 59 to 62 (HLGR), Arg-113, and Arg-146. Residues Lys-197, Glu-319, and 345-348 (GGDT) each bind ATP.

This sequence belongs to the phosphoglycerate kinase family. As to quaternary structure, monomer.

Its subcellular location is the cytoplasm. It catalyses the reaction (2R)-3-phosphoglycerate + ATP = (2R)-3-phospho-glyceroyl phosphate + ADP. Its pathway is carbohydrate degradation; glycolysis; pyruvate from D-glyceraldehyde 3-phosphate: step 2/5. The polypeptide is Phosphoglycerate kinase (Nitratidesulfovibrio vulgaris (strain ATCC 29579 / DSM 644 / CCUG 34227 / NCIMB 8303 / VKM B-1760 / Hildenborough) (Desulfovibrio vulgaris)).